Here is an 804-residue protein sequence, read N- to C-terminus: Probable basic-leucine zipper transcription factor C (804 aa).

Disordered stretches follow at residues phenylalanine 86–asparagine 148 and tyrosine 275–arginine 371. Low complexity predominate over residues asparagine 90 to asparagine 145. Residues tyrosine 275–alanine 291 are compositionally biased toward polar residues. Residues serine 292–asparagine 334 show a composition bias toward low complexity. The segment covering alanine 335–glutamate 356 has biased composition (basic and acidic residues). Residues alanine 415–lysine 478 form the bZIP domain. The interval arginine 421–lysine 436 is basic motif. Positions leucine 443–isoleucine 450 are leucine-zipper. The tract at residues lysine 670–glycine 693 is disordered. Low complexity predominate over residues cysteine 672–asparagine 685.

It belongs to the bZIP family.

It is found in the nucleus. Its function is as follows. Probable transcriptional regulator. The protein is Probable basic-leucine zipper transcription factor C (bzpC) of Dictyostelium discoideum (Social amoeba).